Consider the following 185-residue polypeptide: Peptidyl-tRNA hydrolase (185 aa).

Residue Tyr14 coordinates tRNA. The Proton acceptor role is filled by His19. Positions 64, 66, and 112 each coordinate tRNA.

It belongs to the PTH family. In terms of assembly, monomer.

Its subcellular location is the cytoplasm. It catalyses the reaction an N-acyl-L-alpha-aminoacyl-tRNA + H2O = an N-acyl-L-amino acid + a tRNA + H(+). In terms of biological role, hydrolyzes ribosome-free peptidyl-tRNAs (with 1 or more amino acids incorporated), which drop off the ribosome during protein synthesis, or as a result of ribosome stalling. Functionally, catalyzes the release of premature peptidyl moieties from peptidyl-tRNA molecules trapped in stalled 50S ribosomal subunits, and thus maintains levels of free tRNAs and 50S ribosomes. In Exiguobacterium sibiricum (strain DSM 17290 / CCUG 55495 / CIP 109462 / JCM 13490 / 255-15), this protein is Peptidyl-tRNA hydrolase.